The primary structure comprises 150 residues: Cytochrome c oxidase subunit 5A, mitochondrial (150 aa).

Residues Met1–Tyr41 constitute a mitochondrion transit peptide. Positions Leu2–Ala17 match the SIFI-degron motif. N6-acetyllysine occurs at positions 87 and 113. Thr141 carries the phosphothreonine modification.

Belongs to the cytochrome c oxidase subunit 5A family. As to quaternary structure, component of the cytochrome c oxidase (complex IV, CIV), a multisubunit enzyme composed of 14 subunits. The complex is composed of a catalytic core of 3 subunits MT-CO1, MT-CO2 and MT-CO3, encoded in the mitochondrial DNA, and 11 supernumerary subunits COX4I, COX5A, COX5B, COX6A, COX6B, COX6C, COX7A, COX7B, COX7C, COX8 and NDUFA4, which are encoded in the nuclear genome. The complex exists as a monomer or a dimer and forms supercomplexes (SCs) in the inner mitochondrial membrane with NADH-ubiquinone oxidoreductase (complex I, CI) and ubiquinol-cytochrome c oxidoreductase (cytochrome b-c1 complex, complex III, CIII), resulting in different assemblies (supercomplex SCI(1)III(2)IV(1) and megacomplex MCI(2)III(2)IV(2)). Interacts with AFG1L. Interacts with RAB5IF. In terms of processing, in response to mitochondrial stress, the precursor protein is ubiquitinated by the SIFI complex in the cytoplasm before mitochondrial import, leading to its degradation. Within the SIFI complex, UBR4 initiates ubiquitin chain that are further elongated or branched by KCMF1.

Its subcellular location is the mitochondrion inner membrane. The protein operates within energy metabolism; oxidative phosphorylation. In terms of biological role, component of the cytochrome c oxidase, the last enzyme in the mitochondrial electron transport chain which drives oxidative phosphorylation. The respiratory chain contains 3 multisubunit complexes succinate dehydrogenase (complex II, CII), ubiquinol-cytochrome c oxidoreductase (cytochrome b-c1 complex, complex III, CIII) and cytochrome c oxidase (complex IV, CIV), that cooperate to transfer electrons derived from NADH and succinate to molecular oxygen, creating an electrochemical gradient over the inner membrane that drives transmembrane transport and the ATP synthase. Cytochrome c oxidase is the component of the respiratory chain that catalyzes the reduction of oxygen to water. Electrons originating from reduced cytochrome c in the intermembrane space (IMS) are transferred via the dinuclear copper A center (CU(A)) of subunit 2 and heme A of subunit 1 to the active site in subunit 1, a binuclear center (BNC) formed by heme A3 and copper B (CU(B)). The BNC reduces molecular oxygen to 2 water molecules using 4 electrons from cytochrome c in the IMS and 4 protons from the mitochondrial matrix. In Colobus guereza (Mantled guereza), this protein is Cytochrome c oxidase subunit 5A, mitochondrial (COX5A).